We begin with the raw amino-acid sequence, 507 residues long: Extracellular elastase (507 aa).

The signal sequence occupies residues 1–28 (MKNFSKFALTSIAALTVASPLVNTEVDA). Residues 29 to 207 (KDKVSATQNI…VVDKLNMIKE (179 aa)) constitute a propeptide that is removed on maturation. Asp-347 contacts Ca(2+). His-351 provides a ligand contact to Zn(2+). Glu-352 is a catalytic residue. The Zn(2+) site is built by His-355 and Glu-375. Residues Asp-386, Glu-388, Asp-389, Leu-391, Glu-394, Tyr-397, Thr-398, Val-401, and Asp-404 each coordinate Ca(2+). His-435 (proton donor) is an active-site residue.

Belongs to the peptidase M4 family. Ca(2+) is required as a cofactor. Requires Zn(2+) as cofactor.

It is found in the secreted. Functionally, protease that has a low substrate specificity. Glucagon is preferentially cleaved between aromatic (Phe) and hydrophobic (Val) amino acids. Hydrolyzes casein and elastin. The sequence is that of Extracellular elastase (sepA) from Staphylococcus epidermidis (strain ATCC 12228 / FDA PCI 1200).